The primary structure comprises 376 residues: Rhodopsin (376 aa).

The Extracellular segment spans residues 1–52 (MSSWSNQPAMDDYGLPSSNPYGNFTVVDMAPKDILHMIHPHWYQYPPMNPMM). Asparagine 23 is a glycosylation site (N-linked (GlcNAc...) asparagine). The chain crosses the membrane as a helical span at residues 53-77 (YPLLLIFMLFTGILCLAGNFVTIWV). Over 78–89 (FMNTKSLRTPAN) the chain is Cytoplasmic. A helical membrane pass occupies residues 90 to 112 (LLVVNLAMSDFLMMFTMFPPMMV). Residues 113–126 (TCYYHTWTLGPTFC) are Extracellular-facing. A disulfide bridge connects residues cysteine 126 and cysteine 203. Residues 127 to 149 (QVYAFLGNLCGCASIWTMVFITF) traverse the membrane as a helical segment. The 'Ionic lock' involved in activated form stabilization signature appears at 150–152 (DRY). At 150–168 (DRYNVIVKGVAGEPLSTKK) the chain is on the cytoplasmic side. The helical transmembrane segment at 169-189 (ASLWILTIWVLSITWCIAPFF) threads the bilayer. The Extracellular segment spans residues 190 to 216 (GWNRYVPEGNLTGCGTDYLSEDILSRS). An N-linked (GlcNAc...) asparagine glycan is attached at asparagine 199. Residues 217–237 (YLYDYSTWVYYLPLLPIYCYV) form a helical membrane-spanning segment. Topologically, residues 238 to 278 (SIIKAVAAHEKGMRDQAKKMGIKSLRNEEAQKTSAECRLAK) are cytoplasmic. A helical membrane pass occupies residues 279-300 (IAMTTVALWFIAWTPYLLINWV). The Extracellular segment spans residues 301–311 (GMFARSYLSPV). Residues 312–333 (YTIWGYVFAKANAVYNPIVYAI) traverse the membrane as a helical segment. N6-(retinylidene)lysine is present on lysine 321. Over 334–376 (SHPKYRAAMEKKLPCLSCKTESDDVSESASTTTSSAEEKAESA) the chain is Cytoplasmic. The interval 353–376 (TESDDVSESASTTTSSAEEKAESA) is disordered.

The protein belongs to the G-protein coupled receptor 1 family. Opsin subfamily. As to quaternary structure, homodimer. Interacts with GNAQ. Contains one covalently linked retinal chromophore. As to expression, detected on rhabdomere membranes on photoreceptor cells in the retina (at protein level).

The protein resides in the cell projection. The protein localises to the rhabdomere membrane. Functionally, photoreceptor required for image-forming vision at low light intensity. Can use both retinal and 3-dehydroretinal as visual pigment. Light-induced isomerization of 11-cis to all-trans retinal triggers a conformational change that activates signaling via G-proteins. Signaling via GNAQ probably mediates the activation of phospholipase C. The chain is Rhodopsin (RHO) from Procambarus clarkii (Red swamp crayfish).